The following is a 251-amino-acid chain: Triosephosphate isomerase (251 aa).

9–11 (NWK) is a substrate binding site. The active-site Electrophile is histidine 95. The Proton acceptor role is filled by glutamate 167. Substrate is bound by residues glycine 173, serine 212, and 233–234 (GG).

The protein belongs to the triosephosphate isomerase family. As to quaternary structure, homodimer.

The protein localises to the cytoplasm. It catalyses the reaction D-glyceraldehyde 3-phosphate = dihydroxyacetone phosphate. It functions in the pathway carbohydrate biosynthesis; gluconeogenesis. The protein operates within carbohydrate degradation; glycolysis; D-glyceraldehyde 3-phosphate from glycerone phosphate: step 1/1. Functionally, involved in the gluconeogenesis. Catalyzes stereospecifically the conversion of dihydroxyacetone phosphate (DHAP) to D-glyceraldehyde-3-phosphate (G3P). This is Triosephosphate isomerase from Pseudomonas syringae pv. syringae (strain B728a).